We begin with the raw amino-acid sequence, 568 residues long: WW domain-containing protein A (568 aa).

The C2 domain maps to 6–129 (PLNNSNGSNS…TGPISHDVVF (124 aa)). In terms of domain architecture, WW 1 spans 325–359 (VKLPDGWESRIDPVSGKVFYLNHNNKTTSWISPLE). The interval 376-461 (TILDNNNNNN…SRPKKTPATP (86 aa)) is disordered. The segment covering 380–418 (NNNNNNNNNNNNNNNNNNNNNNINNTNNIQQKQQAQQQP) has biased composition (low complexity). Residues 435–451 (QKEKEKEKEINAEDYKI) are compositionally biased toward basic and acidic residues. The WW 2 domain maps to 519 to 552 (QGLPNGWEVRQDQFGRVFYVDHINRATTWTRPTV).

Interacts with calmodulin in the absence of Ca(2+).

The protein resides in the nucleus. It is found in the nucleolus. The protein localises to the cytoplasm. It localises to the cell cortex. Its subcellular location is the cytoskeleton. Its function is as follows. Involved in regulation of actin cytoskeleton organization and cytokinesis. In Dictyostelium discoideum (Social amoeba), this protein is WW domain-containing protein A.